The primary structure comprises 461 residues: ATP-dependent protease ATPase subunit HslU (461 aa).

ATP is bound by residues Ile18, 60–65 (GVGKTE), Asp274, Glu339, and Arg411.

Belongs to the ClpX chaperone family. HslU subfamily. In terms of assembly, a double ring-shaped homohexamer of HslV is capped on each side by a ring-shaped HslU homohexamer. The assembly of the HslU/HslV complex is dependent on binding of ATP.

Its subcellular location is the cytoplasm. Functionally, ATPase subunit of a proteasome-like degradation complex; this subunit has chaperone activity. The binding of ATP and its subsequent hydrolysis by HslU are essential for unfolding of protein substrates subsequently hydrolyzed by HslV. HslU recognizes the N-terminal part of its protein substrates and unfolds these before they are guided to HslV for hydrolysis. The protein is ATP-dependent protease ATPase subunit HslU of Carboxydothermus hydrogenoformans (strain ATCC BAA-161 / DSM 6008 / Z-2901).